A 394-amino-acid chain; its full sequence is Argininosuccinate synthase (394 aa).

8 to 16 (AYSGGLDTS) is a binding site for ATP. Residues Tyr86 and Ser91 each coordinate L-citrulline. ATP is bound at residue Gly116. The L-aspartate site is built by Thr118, Asn122, and Asp123. L-citrulline is bound at residue Asn122. L-citrulline contacts are provided by Arg126, Ser172, Ser181, Glu257, and Tyr269.

This sequence belongs to the argininosuccinate synthase family. Type 1 subfamily. In terms of assembly, homotetramer.

The protein localises to the cytoplasm. The catalysed reaction is L-citrulline + L-aspartate + ATP = 2-(N(omega)-L-arginino)succinate + AMP + diphosphate + H(+). The protein operates within amino-acid biosynthesis; L-arginine biosynthesis; L-arginine from L-ornithine and carbamoyl phosphate: step 2/3. This is Argininosuccinate synthase from Methanosarcina mazei (strain ATCC BAA-159 / DSM 3647 / Goe1 / Go1 / JCM 11833 / OCM 88) (Methanosarcina frisia).